A 489-amino-acid chain; its full sequence is Betaine aldehyde dehydrogenase (489 aa).

Residue Asn93 coordinates K(+). Residue Gly150–Trp152 coordinates NAD(+). Catalysis depends on Lys162, which acts as the Charge relay system. Lys176–Glu179 lines the NAD(+) pocket. Val180 contacts K(+). Residue Glu229–Thr232 coordinates NAD(+). Position 245 (Leu245) interacts with K(+). Glu251 (proton acceptor) is an active-site residue. NAD(+) is bound by residues Gly253, Cys285, and Glu386. The active-site Nucleophile is the Cys285. Cysteine sulfenic acid (-SOH) is present on Cys285. The K(+) site is built by Lys456 and Gly459. Residue Glu463 is the Charge relay system of the active site.

The protein belongs to the aldehyde dehydrogenase family. In terms of assembly, dimer of dimers. K(+) serves as cofactor.

It carries out the reaction betaine aldehyde + NAD(+) + H2O = glycine betaine + NADH + 2 H(+). It participates in amine and polyamine biosynthesis; betaine biosynthesis via choline pathway; betaine from betaine aldehyde: step 1/1. Involved in the biosynthesis of the osmoprotectant glycine betaine. Catalyzes the irreversible oxidation of betaine aldehyde to the corresponding acid. The chain is Betaine aldehyde dehydrogenase from Chromohalobacter salexigens (strain ATCC BAA-138 / DSM 3043 / CIP 106854 / NCIMB 13768 / 1H11).